Reading from the N-terminus, the 291-residue chain is Pca regulon regulatory protein (291 aa).

A disordered region spans residues 1-22 (MSDETLVNDPVNPEPARPASAA). One can recognise an HTH iclR-type domain in the interval 45 to 105 (MTSLARGLAV…SDGRTYSLLP (61 aa)). The segment at residues 67–86 (IAQISHRTEIPRAAVRRCLH) is a DNA-binding region (H-T-H motif). Positions 120–291 (LAISAQPYLD…SRDLCHQLFG (172 aa)) constitute an IclR-ED domain.

Its function is as follows. Positive regulator of all genes within the pca regulon, pcaBDC, pcaIJ and pcaF. Also required for the chemotactic response to aromatic compounds. The protein is Pca regulon regulatory protein (pcaR) of Pseudomonas putida (Arthrobacter siderocapsulatus).